Reading from the N-terminus, the 166-residue chain is Mitochondrial inner membrane protease subunit 1 (166 aa).

Residues Ser-40 and Lys-83 contribute to the active site.

It belongs to the peptidase S26 family. IMP1 subfamily. As to quaternary structure, heterodimer of 2 subunits, IMMPL1 and IMMPL2.

The protein resides in the mitochondrion inner membrane. Its function is as follows. Catalyzes the removal of transit peptides required for the targeting of proteins from the mitochondrial matrix, across the inner membrane, into the inter-membrane space. Known to process the nuclear encoded protein DIABLO. This is Mitochondrial inner membrane protease subunit 1 (IMMP1L) from Homo sapiens (Human).